A 171-amino-acid chain; its full sequence is uncharacterized protein (171 aa).

This is an uncharacterized protein from Thermofilum pendens.